A 509-amino-acid polypeptide reads, in one-letter code: Transcription factor SOX-9 (509 aa).

2 disordered regions span residues 1 to 67 (MNLL…SEED) and 160 to 273 (RLRV…FRDV). Residues 30–41 (SAGSPCPSGSGS) show a composition bias toward low complexity. Residues 42–52 (DTENTRPQENT) are compositionally biased toward polar residues. Composition is skewed to basic and acidic residues over residues 56 to 67 (GEPDLKKESEED) and 160 to 174 (RLRVQHKKDHPDYKY). The interval 63–103 (ESEEDKFPVCIREAVSQVLKGYDWTLVPMPVRVNGSSKNKP) is dimerization (DIM). Positions 63-103 (ESEEDKFPVCIREAVSQVLKGYDWTLVPMPVRVNGSSKNKP) are PQA. Ser64 carries the phosphoserine modification. The segment at residues 105–173 (VKRPMNAFMV…QHKKDHPDYK (69 aa)) is a DNA-binding region (HMG box). Ser211 is modified (phosphoserine). Residues 224–307 (PGEHSGQSQG…LPPNGHPGVP (84 aa)) are transactivation domain (TAM). 2 consecutive short sequence motifs (9aaTAD) follow at residues 275 to 284 (IGELSSDVIS) and 290 to 298 (DVNEFDQYL). Positions 334–415 (VWMSKQQAPP…HYSEQQQHSP (82 aa)) are disordered. Residues 341–376 (APPPPPQQPPQAPPAPQAPPQPQAAPPQQPAAPPQQ) show a composition bias toward pro residues. Residues 380 to 415 (HTLTTLSSEPGQSQRTHIKTEQLSPSHYSEQQQHSP) show a composition bias toward polar residues. A transactivation domain (TAC) region spans residues 394 to 509 (RTHIKTEQLS…QPVYTQLTRP (116 aa)). A Glycyl lysine isopeptide (Lys-Gly) (interchain with G-Cter in ubiquitin) cross-link involves residue Lys398. The 9aaTAD 3 signature appears at 460-468 (TGLYSTFTY). Positions 479 to 509 (PIADTSGVPSIPQTHSPQHWEQPVYTQLTRP) are disordered. Positions 485-509 (GVPSIPQTHSPQHWEQPVYTQLTRP) are enriched in polar residues.

As to quaternary structure, homodimer; homodimerization is required for activity. Interacts (via C-terminus) with ZNF219; forming a complex that binds to the COL2A1 promoter and activates COL2A1 expression. Interacts with DDRGK1. Interacts with EP300/p300. Interacts with beta-catenin (CTNNB1); inhibiting CTNNB1 activity by competing with the binding sites of TCF/LEF within CTNNB1. Post-translationally, acetylated; acetylation impairs nuclear localization and ability to transactivate expression of target genes. Deacetylated by SIRT1. Phosphorylation at Ser-64 and Ser-211 by PKA increases transcriptional activity and may help delay chondrocyte maturation downstream of PTHLH/PTHrP signaling. Phosphorylation at either Ser-64 or Ser-211 is required for sumoylation, but phosphorylation is not dependent on sumoylation. Phosphorylated on tyrosine residues; tyrosine dephosphorylation by PTPN11/SHP2 blocks SOX9 phosphorylation by PKA and subsequent SUMOylation. In terms of processing, sumoylated; phosphorylation at either Ser-64 or Ser-211 is required for sumoylation. Sumoylation is induced by BMP signaling pathway. Post-translationally, ubiquitinated; ubiquitination leads to proteasomal degradation and is negatively regulated by DDRGK1.

The protein localises to the nucleus. Transcription factor that plays a key role in chondrocytes differentiation and skeletal development. Specifically binds the 5'-ACAAAG-3' DNA motif present in enhancers and super-enhancers and promotes expression of genes important for chondrogenesis, including cartilage matrix protein-coding genes COL2A1, COL4A2, COL9A1, COL11A2 and ACAN, SOX5 and SOX6. Also binds to some promoter regions. Plays a central role in successive steps of chondrocyte differentiation. Absolutely required for precartilaginous condensation, the first step in chondrogenesis during which skeletal progenitors differentiate into prechondrocytes. Together with SOX5 and SOX6, required for overt chondrogenesis when condensed prechondrocytes differentiate into early stage chondrocytes, the second step in chondrogenesis. Later, required to direct hypertrophic maturation and block osteoblast differentiation of growth plate chondrocytes: maintains chondrocyte columnar proliferation, delays prehypertrophy and then prevents osteoblastic differentiation of chondrocytes by lowering beta-catenin (CTNNB1) signaling and RUNX2 expression. Also required for chondrocyte hypertrophy, both indirectly, by keeping the lineage fate of chondrocytes, and directly, by remaining present in upper hypertrophic cells and transactivating COL10A1 along with MEF2C. Low lipid levels are the main nutritional determinant for chondrogenic commitment of skeletal progenitor cells: when lipids levels are low, FOXO (FOXO1 and FOXO3) transcription factors promote expression of SOX9, which induces chondrogenic commitment and suppresses fatty acid oxidation. Mechanistically, helps, but is not required, to remove epigenetic signatures of transcriptional repression and deposit active promoter and enhancer marks at chondrocyte-specific genes. Acts in cooperation with the Hedgehog pathway-dependent GLI (GLI1 and GLI3) transcription factors. In addition to cartilage development, also acts as a regulator of proliferation and differentiation in epithelial stem/progenitor cells: involved in the lung epithelium during branching morphogenesis, by balancing proliferation and differentiation and regulating the extracellular matrix. Controls epithelial branching during kidney development. The protein is Transcription factor SOX-9 (SOX9) of Callithrix jacchus (White-tufted-ear marmoset).